The primary structure comprises 421 residues: Large ribosomal subunit protein uL4 (421 aa).

The residue at position 2 (Ala-2) is an N-acetylalanine. Lys-14 carries the post-translational modification N6-acetyllysine. Arg-97 is modified (omega-N-methylarginine). N6-acetyllysine is present on Lys-106. A Glycyl lysine isopeptide (Lys-Gly) (interchain with G-Cter in SUMO2) cross-link involves residue Lys-239. Position 259 is an N6-acetyllysine (Lys-259). Residue Thr-266 is modified to Phosphothreonine. Phosphoserine is present on residues Ser-290 and Ser-295. Citrulline is present on Arg-300. A Glycyl lysine isopeptide (Lys-Gly) (interchain with G-Cter in SUMO2) cross-link involves residue Lys-327. An N6-acetyllysine mark is found at Lys-333 and Lys-353. At Lys-364 the chain carries N6-acetyllysine; alternate. Lys-364 is covalently cross-linked (Glycyl lysine isopeptide (Lys-Gly) (interchain with G-Cter in SUMO1); alternate). The residue at position 365 (Ser-365) is a Phosphoserine. The segment covering 365 to 379 (SEKIVPEKGAGDKKP) has biased composition (basic and acidic residues). A disordered region spans residues 365–421 (SEKIVPEKGAGDKKPAVGKKGKKPVDAKKLKKPAGKKVVTKKPAEKKPTTEEKKSAA). Basic residues predominate over residues 393-404 (KLKKPAGKKVVT). Positions 406–421 (KPAEKKPTTEEKKSAA) are enriched in basic and acidic residues.

This sequence belongs to the universal ribosomal protein uL4 family. As to quaternary structure, component of the large ribosomal subunit. May bind IPO9 with low affinity. Interacts with RBM3. In terms of processing, citrullinated by PADI4.

The protein resides in the cytoplasm. In terms of biological role, component of the large ribosomal subunit. The ribosome is a large ribonucleoprotein complex responsible for the synthesis of proteins in the cell. The protein is Large ribosomal subunit protein uL4 (Rpl4) of Rattus norvegicus (Rat).